The following is a 142-amino-acid chain: Transcriptional regulator MraZ (142 aa).

SpoVT-AbrB domains follow at residues 5 to 47 and 76 to 119; these read THTP…PTPE and AHDE…DRVA.

It belongs to the MraZ family. As to quaternary structure, forms oligomers.

The protein resides in the cytoplasm. It localises to the nucleoid. In Salinispora tropica (strain ATCC BAA-916 / DSM 44818 / JCM 13857 / NBRC 105044 / CNB-440), this protein is Transcriptional regulator MraZ.